The sequence spans 123 residues: Large ribosomal subunit protein bL12 (123 aa).

Belongs to the bacterial ribosomal protein bL12 family. Homodimer. Part of the ribosomal stalk of the 50S ribosomal subunit. Forms a multimeric L10(L12)X complex, where L10 forms an elongated spine to which 2 to 4 L12 dimers bind in a sequential fashion. Binds GTP-bound translation factors.

Forms part of the ribosomal stalk which helps the ribosome interact with GTP-bound translation factors. Is thus essential for accurate translation. This chain is Large ribosomal subunit protein bL12, found in Chromobacterium violaceum (strain ATCC 12472 / DSM 30191 / JCM 1249 / CCUG 213 / NBRC 12614 / NCIMB 9131 / NCTC 9757 / MK).